A 357-amino-acid polypeptide reads, in one-letter code: Adenosine deaminase (357 aa).

Residues His-16 and His-18 each contribute to the Zn(2+) site. Residues His-18, Asp-20, and Gly-185 each coordinate substrate. Position 212 (His-212) interacts with Zn(2+). Residue Glu-215 is the Proton donor of the active site. A Zn(2+)-binding site is contributed by Asp-294. Asp-295 contacts substrate.

It belongs to the metallo-dependent hydrolases superfamily. Adenosine and AMP deaminases family. Zn(2+) is required as a cofactor.

It localises to the cell membrane. It is found in the cell junction. Its subcellular location is the cytoplasmic vesicle lumen. The protein localises to the cytoplasm. The protein resides in the lysosome. It catalyses the reaction adenosine + H2O + H(+) = inosine + NH4(+). The catalysed reaction is 2'-deoxyadenosine + H2O + H(+) = 2'-deoxyinosine + NH4(+). Catalyzes the hydrolytic deamination of adenosine and 2-deoxyadenosine. Plays an important role in purine metabolism and in adenosine homeostasis. Modulates signaling by extracellular adenosine, and so contributes indirectly to cellular signaling events. May act as a positive regulator of T-cell coactivation. In Gallus gallus (Chicken), this protein is Adenosine deaminase (ADA).